The following is a 246-amino-acid chain: Probable septum site-determining protein MinC (246 aa).

The protein belongs to the MinC family. As to quaternary structure, interacts with MinD and FtsZ.

In terms of biological role, cell division inhibitor that blocks the formation of polar Z ring septums. Rapidly oscillates between the poles of the cell to destabilize FtsZ filaments that have formed before they mature into polar Z rings. Prevents FtsZ polymerization. This chain is Probable septum site-determining protein MinC, found in Pseudomonas savastanoi pv. phaseolicola (strain 1448A / Race 6) (Pseudomonas syringae pv. phaseolicola (strain 1448A / Race 6)).